The following is a 118-amino-acid chain: Large ribosomal subunit protein bL20 (118 aa).

Belongs to the bacterial ribosomal protein bL20 family.

Functionally, binds directly to 23S ribosomal RNA and is necessary for the in vitro assembly process of the 50S ribosomal subunit. It is not involved in the protein synthesizing functions of that subunit. The chain is Large ribosomal subunit protein bL20 from Enterobacter sp. (strain 638).